The following is a 208-amino-acid chain: Tektin bundle-interacting protein 1 (208 aa).

Microtubule inner protein component of sperm flagellar doublet microtubules. In terms of tissue distribution, expressed in trachea multiciliated cells.

It is found in the cytoplasm. It localises to the cytoskeleton. The protein localises to the cilium axoneme. The protein resides in the flagellum axoneme. Functionally, microtubule inner protein (MIP) part of the dynein-decorated doublet microtubules (DMTs) in cilia axoneme, which is required for motile cilia beating. Located at the center of the tektin bundle where may function to recruit tektins or stabilize the bundle. This Bos taurus (Bovine) protein is Tektin bundle-interacting protein 1 (TEKTIP1).